Here is a 468-residue protein sequence, read N- to C-terminus: Glutamate--tRNA ligase (468 aa).

The short motif at 12-22 (PSPTGMMHIGT) is the 'HIGH' region element. The short motif at 238 to 242 (KLSKR) is the 'KMSKS' region element. Lys-241 lines the ATP pocket.

It belongs to the class-I aminoacyl-tRNA synthetase family. Glutamate--tRNA ligase type 1 subfamily. Monomer.

The protein resides in the cytoplasm. The catalysed reaction is tRNA(Glu) + L-glutamate + ATP = L-glutamyl-tRNA(Glu) + AMP + diphosphate. Functionally, catalyzes the attachment of glutamate to tRNA(Glu) in a two-step reaction: glutamate is first activated by ATP to form Glu-AMP and then transferred to the acceptor end of tRNA(Glu). The polypeptide is Glutamate--tRNA ligase (Phenylobacterium zucineum (strain HLK1)).